A 1650-amino-acid polypeptide reads, in one-letter code: Transmembrane domain-containing protein DDB_G0287209 (1650 aa).

Residues 194–225 (NNNNNNFNNNNNNNNNNNNNKNNYNNNKSNLI) are a coiled coil. Disordered regions lie at residues 197–216 (NNNF…NKNN) and 1218–1296 (ENQF…NINN). The span at 1224-1284 (NNNENSGSSG…SNSNENNYNG (61 aa)) shows a compositional bias: low complexity. Helical transmembrane passes span 1314–1334 (PLLL…LSLF), 1347–1369 (ILFL…LQLF), 1390–1410 (ISIS…DVTS), 1454–1474 (WNIY…LIVP), 1489–1509 (ILFI…VILF), 1515–1535 (WWDL…VTLL), 1539–1559 (PVYF…QFAF), 1570–1590 (VENL…TSII), and 1595–1615 (FNLI…ITII).

The protein localises to the membrane. The protein is Transmembrane domain-containing protein DDB_G0287209 of Dictyostelium discoideum (Social amoeba).